Consider the following 486-residue polypeptide: Putative protease Do-like 13 (486 aa).

Positions 44–229 (KINTFSSKPN…IPAPVVKHFI (186 aa)) are serine protease. Residues His-83, Asp-114, and Ser-192 each act as charge relay system in the active site. The 94-residue stretch at 241–334 (FCSLNLSYQH…TILLKILREG (94 aa)) folds into the PDZ domain.

The protein belongs to the peptidase S1C family.

Functionally, putative serine protease. In Arabidopsis thaliana (Mouse-ear cress), this protein is Putative protease Do-like 13 (DEGP13).